The primary structure comprises 560 residues: Eukaryotic translation initiation factor 3 subunit D-1 (560 aa).

Positions 98–166 are disordered; the sequence is VQKPPHQRGR…RGPPPKMRES (69 aa). The segment covering 100–121 has biased composition (basic residues); it reads KPPHQRGRFRNMRNSRSGRGRN. At Thr128 the chain carries Phosphothreonine. Residues 147–156 show a composition bias toward basic residues; sequence GRGMGKKFGH. Residues 291–305 are RNA gate; sequence EFDLLTVNESSVEPP.

Belongs to the eIF-3 subunit D family. In terms of assembly, component of the eukaryotic translation initiation factor 3 (eIF-3) complex. The eIF-3 complex interacts with pix.

The protein localises to the cytoplasm. In terms of biological role, mRNA cap-binding component of the eukaryotic translation initiation factor 3 (eIF-3) complex, which is involved in protein synthesis of a specialized repertoire of mRNAs and, together with other initiation factors, stimulates binding of mRNA and methionyl-tRNAi to the 40S ribosome. The eIF-3 complex specifically targets and initiates translation of a subset of mRNAs involved in cell proliferation. In the eIF-3 complex, eif3d specifically recognizes and binds the 7-methylguanosine cap of a subset of mRNAs. The polypeptide is Eukaryotic translation initiation factor 3 subunit D-1 (Drosophila yakuba (Fruit fly)).